A 148-amino-acid chain; its full sequence is Large ribosomal subunit protein bL9 (148 aa).

It belongs to the bacterial ribosomal protein bL9 family.

Binds to the 23S rRNA. This chain is Large ribosomal subunit protein bL9, found in Staphylococcus saprophyticus subsp. saprophyticus (strain ATCC 15305 / DSM 20229 / NCIMB 8711 / NCTC 7292 / S-41).